We begin with the raw amino-acid sequence, 91 residues long: Acylphosphatase (91 aa).

The Acylphosphatase-like domain maps to 6–91; that stretch reads CMRCYISGRV…WKDYISFDVL (86 aa). Catalysis depends on residues Arg21 and Asn39.

This sequence belongs to the acylphosphatase family.

It carries out the reaction an acyl phosphate + H2O = a carboxylate + phosphate + H(+). The sequence is that of Acylphosphatase (acyP) from Legionella pneumophila (strain Paris).